A 764-amino-acid polypeptide reads, in one-letter code: Protein FAR1-RELATED SEQUENCE 7 (764 aa).

In terms of domain architecture, FAR1 1 spans 42–118 (DYYNSYATRT…QKEHNHDLGG (77 aa)). The interval 119–144 (HIEEAQTTPRPSVQQRAPAPTKLGIS) is disordered. Positions 123–133 (AQTTPRPSVQQ) are enriched in polar residues. The FAR1 2 domain occupies 204-280 (QFYQAYAEVV…NKDHNHDLEP (77 aa)). Residues 375–471 (AVVFDTSYRK…SAWQIRSKER (97 aa)) enclose the MULE domain. The segment at 650–686 (HAVTFSASNLNASCSCQMFEYEGLLCRHILKVFNLLD) adopts an SWIM-type zinc-finger fold.

This sequence belongs to the FHY3/FAR1 family. Expressed in hypocotyls, rosette and cauline leaves, inflorescences stems, flowers and siliques.

Its subcellular location is the nucleus. Putative transcription activator involved in regulating light control of development. In Arabidopsis thaliana (Mouse-ear cress), this protein is Protein FAR1-RELATED SEQUENCE 7 (FRS7).